Consider the following 76-residue polypeptide: Potassium/proton antiporter CemA (76 aa).

Residues 35 to 52 (QILSCLVSIFPVILDTIF) form a helical membrane-spanning segment.

The protein belongs to the CemA family.

The protein resides in the plastid. It localises to the chloroplast inner membrane. The catalysed reaction is K(+)(in) + H(+)(out) = K(+)(out) + H(+)(in). Its function is as follows. Contributes to K(+)/H(+) antiport activity by supporting proton efflux to control proton extrusion and homeostasis in chloroplasts in a light-dependent manner to modulate photosynthesis. Prevents excessive induction of non-photochemical quenching (NPQ) under continuous-light conditions. Indirectly promotes efficient inorganic carbon uptake into chloroplasts. In Vicia faba (Broad bean), this protein is Potassium/proton antiporter CemA.